The sequence spans 466 residues: UDP-N-acetylmuramate--L-alanine ligase (466 aa).

114-120 contacts ATP; it reads GTHGKTT.

It belongs to the MurCDEF family.

It is found in the cytoplasm. It catalyses the reaction UDP-N-acetyl-alpha-D-muramate + L-alanine + ATP = UDP-N-acetyl-alpha-D-muramoyl-L-alanine + ADP + phosphate + H(+). It participates in cell wall biogenesis; peptidoglycan biosynthesis. Cell wall formation. This chain is UDP-N-acetylmuramate--L-alanine ligase, found in Mesorhizobium japonicum (strain LMG 29417 / CECT 9101 / MAFF 303099) (Mesorhizobium loti (strain MAFF 303099)).